The primary structure comprises 236 residues: Small ribosomal subunit protein uS2c (236 aa).

This sequence belongs to the universal ribosomal protein uS2 family.

It is found in the plastid. This is Small ribosomal subunit protein uS2c (rps2) from Cuscuta exaltata (Tall dodder).